Consider the following 182-residue polypeptide: Adenylate kinase (182 aa).

12–17 (GAGKGT) is a binding site for ATP. The interval 32–61 (STGELLRKEIEMNTALGIQVKDIMNRGELV) is NMP. AMP-binding positions include Thr33, Arg38, 59-61 (ELV), 85-88 (GYPR), and Gln92. The LID stretch occupies residues 126–132 (LRGRKDD). Residue Arg127 coordinates ATP. Positions 129 and 140 each coordinate AMP. An ATP-binding site is contributed by Arg168.

It belongs to the adenylate kinase family. As to quaternary structure, monomer.

It is found in the cytoplasm. It catalyses the reaction AMP + ATP = 2 ADP. It participates in purine metabolism; AMP biosynthesis via salvage pathway; AMP from ADP: step 1/1. Its function is as follows. Catalyzes the reversible transfer of the terminal phosphate group between ATP and AMP. Plays an important role in cellular energy homeostasis and in adenine nucleotide metabolism. This is Adenylate kinase from Prochlorococcus marinus (strain MIT 9301).